The sequence spans 126 residues: Putative regulator AldR (126 aa).

It belongs to the RutC family.

Implicated in the regulation of isoleucine biosynthesis. The polypeptide is Putative regulator AldR (aldR) (Lactococcus lactis subsp. lactis (strain IL1403) (Streptococcus lactis)).